The sequence spans 418 residues: Gamma-glutamyl phosphate reductase (418 aa).

This sequence belongs to the gamma-glutamyl phosphate reductase family.

It localises to the cytoplasm. It catalyses the reaction L-glutamate 5-semialdehyde + phosphate + NADP(+) = L-glutamyl 5-phosphate + NADPH + H(+). It functions in the pathway amino-acid biosynthesis; L-proline biosynthesis; L-glutamate 5-semialdehyde from L-glutamate: step 2/2. Its function is as follows. Catalyzes the NADPH-dependent reduction of L-glutamate 5-phosphate into L-glutamate 5-semialdehyde and phosphate. The product spontaneously undergoes cyclization to form 1-pyrroline-5-carboxylate. The sequence is that of Gamma-glutamyl phosphate reductase from Agathobacter rectalis (strain ATCC 33656 / DSM 3377 / JCM 17463 / KCTC 5835 / VPI 0990) (Eubacterium rectale).